We begin with the raw amino-acid sequence, 436 residues long: MLGVKGNYLLPADCAHRLVAELQGALDSCADRQRQLERSLRVSRRLLQVWEPARTPSPVPETKEEDPSPACAPSSQDLEELELLTQALEKAVRVRKGVSNAGQRDRTPTLTSKAATSGAAAASHPRAPSRGGSRVLGTRSTKGIQRATAPPKDYPEHRLRSKGDKTHVRTQDQTTGYGPDLRDQQMTPSSAHHTTELFALKEKGTLLQLPEDFRKAVSRNSCLWAQLNSARTNDSTDATRAAKTQFLHKLQMASGCSSHRPSATEVEAHARILRKACMLLRLRMQKELAIAPTDWMQEYRCLLTLEGLQTVVGQCLHRIQVLQAAVTEQLPGECLAETRTQASSVCGGEVDSACSPELLLYASTEELQTLATLKLQVALLHQQIHLEKVLMAELLPLINTQDPGGPPWLALCRAAYSLLCEGGERFLTVLRDDPAD.

Disordered stretches follow at residues 53-76 and 94-191; these read ARTP…PSSQ and VRKG…PSSA. Over residues 111 to 131 the composition is skewed to low complexity; sequence TSKAATSGAAAASHPRAPSRG. The segment covering 153-170 has biased composition (basic and acidic residues); sequence DYPEHRLRSKGDKTHVRT. Position 161 is a phosphoserine (serine 161).

As to quaternary structure, interacts with TEDC1. Found in a complex with TEDC1, TEDC2, TUBE1 and TUBD1.

It localises to the cell projection. The protein resides in the cilium. The protein localises to the cytoplasm. Its subcellular location is the cytoskeleton. It is found in the microtubule organizing center. It localises to the centrosome. The protein resides in the centriole. In terms of biological role, acts as a positive regulator of ciliary hedgehog signaling. Required for centriole stability. This chain is Tubulin epsilon and delta complex protein 2, found in Mus musculus (Mouse).